A 117-amino-acid chain; its full sequence is Protein OPG035 (117 aa).

Belongs to the poxviridae OPG035 family.

Its function is as follows. Bcl-2-like protein which contributes to virulence by preventing host NF-kappa-B activation in response to pro-inflammatory stimuli such as TNF-alpha or IL1B. The polypeptide is Protein OPG035 (OPG035) (Homo sapiens (Human)).